The chain runs to 99 residues: NADH dehydrogenase [ubiquinone] 1 alpha subcomplex subunit 2 (99 aa).

Position 2 is an N-acetylalanine (Ala2). The cysteines at positions 24 and 58 are disulfide-linked. Lys64 is modified (N6-acetyllysine; alternate). The residue at position 64 (Lys64) is an N6-succinyllysine; alternate. Lys75 is subject to N6-acetyllysine.

The protein belongs to the complex I NDUFA2 subunit family. In terms of assembly, complex I is composed of 45 different subunits.

The protein resides in the mitochondrion inner membrane. In terms of biological role, accessory subunit of the mitochondrial membrane respiratory chain NADH dehydrogenase (Complex I), that is believed not to be involved in catalysis. Complex I functions in the transfer of electrons from NADH to the respiratory chain. The immediate electron acceptor for the enzyme is believed to be ubiquinone. The polypeptide is NADH dehydrogenase [ubiquinone] 1 alpha subcomplex subunit 2 (NDUFA2) (Bos taurus (Bovine)).